The primary structure comprises 1163 residues: NACHT, LRR and PYD domains-containing protein 5 (1163 aa).

Basic and acidic residues-rich tracts occupy residues Met1 to Gly42, Pro56 to Gly94, and Pro108 to Ser127. The interval Met1–Asp201 is disordered. A compositionally biased stretch (polar residues) spans Glu128 to Val137. The span at Ala153–Gly173 shows a compositional bias: basic and acidic residues. The region spanning His243 to Leu565 is the NACHT domain. An ATP-binding site is contributed by Gly249 to Ser256. LRR repeat units follow at residues Asn801 to Glu822, Ser830 to Thr851, Arg858 to Gly878, Leu887 to Leu906, Asn915 to Cys935, Ala944 to Ala964, Lys972 to Glu993, Tyr1001 to Cys1022, His1029 to Glu1050, Ser1058 to Leu1079, and His1086 to Ser1107.

The protein belongs to the NLRP family. As to quaternary structure, component of the subcortical maternal complex (SCMC), at least composed of NLRP5, KHDC3, OOEP, and TLE6. Within the complex, interacts with OOEP, KHDC3 and TLE6. The SCMC may facilitate translocation of its components between the nuclear and cytoplasmic compartments. As part of the SCMC interacts with the SCMC-associated protein ZBED3. As part of the SCMC interacts with the SCMC-associated protein CFL1/Cofilin-1. Interacts with PRKCE. Interacts with TUBB3 at cytoskeleton microtubules. Post-translationally, phosphorylated by PRKCE.

Its subcellular location is the cytoplasm. The protein resides in the cytoplasmic vesicle. The protein localises to the secretory vesicle. It is found in the cortical granule. It localises to the mitochondrion. Its subcellular location is the nucleus. The protein resides in the nucleolus. The protein localises to the golgi apparatus. Its function is as follows. Component of the subcortical maternal complex (SCMC), a multiprotein complex that plays a key role in early embryonic development. The SCMC complex is a structural constituent of cytoplasmic lattices, which consist in fibrous structures found in the cytoplasm of oocytes and preimplantation embryos. They are required to store maternal proteins critical for embryonic development, such as proteins that control epigenetic reprogramming of the preimplantation embryo, and prevent their degradation or activation. Required for the localization of cortical granules to the cortex of oocytes, via association with the cortical actin scaffold. Required for cortical actin clearance prior to oocyte exocytosis and prevention of polyspermy. Involved in regulating post-fertilization Ca(2+) release and endoplasmic reticulum storage (ER) storage via regulation of cellular localization. May be involved in the localization of mitochondria to the cytoplasm and perinuclear region in oocytes and early stage embryos, independent of its role in CPL formation. The polypeptide is NACHT, LRR and PYD domains-containing protein 5 (Mus musculus (Mouse)).